A 31-amino-acid polypeptide reads, in one-letter code: Small protein MgtS (31 aa).

At 1–4 the chain is on the periplasmic side; sequence MLGN. The chain crosses the membrane as a helical span at residues 5 to 25; sequence MNVFMAVLGIILFSGFLAAYF. Residues 26–31 are Cytoplasmic-facing; sequence SHKWDD.

In terms of assembly, interacts with MgtA.

Its subcellular location is the cell inner membrane. Functionally, modulates intracellular Mg(2+) levels to maintain cellular integrity upon Mg(2+) limitation. Acts by binding and stabilizing the Mg(2+) transporter MgtA, thereby leading to increased intracellular level of Mg(2+). May inhibit FtsH proteolysis of MgtA. The sequence is that of Small protein MgtS from Escherichia coli (strain K12).